The following is a 470-amino-acid chain: MSKKYDAGVKEYRDTYWTPDYVPLDTDLLACFKVTGQEGVPREEVAAAVAAESSTGTWSTVWSELLTDLEFYKGRCYRIEDVPGDKESFYAFIAYPLDLFEEGSITNVLTSLVGNVFGFKALRHLRLEDIRFPMAFIKTCGGPPNGIVVERDRLNKYGRPLLGCTIKPKLGLSGKNYGRVVYECLRGGLDLTKDDENINSQPFQRWRERFEFVAEAVKLAQQETGEVKGHYLNCTATTPEEMYERAEFAKELDMPIIMHDYITGGFTANTGLANWCRKNGMLLHIHRAMHAVIDRHPKHGIHFRVLAKCLRLSGGDQLHTGTVVGKLEGDRQTTLGFIDNLRESFVPEDRNRGNFFDQDWGSMPGVFAVASGGIHVWHMPALLAIFGDDSCLQFGGGTHGHPWGSAAGAAANRVALEACVKARNAGREIEKESRDILMEAAKHSPELAIALETWKEIKFEFDTVDKLDVQ.

Positions 115 and 165 each coordinate substrate. Lys167 (proton acceptor) is an active-site residue. Lys169 is a substrate binding site. Positions 193, 195, and 196 each coordinate Mg(2+). Lys193 is modified (N6-carboxylysine). His286 (proton acceptor) is an active-site residue. Arg287, His319, and Ser371 together coordinate substrate.

It belongs to the RuBisCO large chain family. Type I subfamily. In terms of assembly, heterohexadecamer of 8 large chains and 8 small chains. Mg(2+) is required as a cofactor.

It localises to the carboxysome. The catalysed reaction is 2 (2R)-3-phosphoglycerate + 2 H(+) = D-ribulose 1,5-bisphosphate + CO2 + H2O. It catalyses the reaction D-ribulose 1,5-bisphosphate + O2 = 2-phosphoglycolate + (2R)-3-phosphoglycerate + 2 H(+). RuBisCO catalyzes two reactions: the carboxylation of D-ribulose 1,5-bisphosphate, the primary event in carbon dioxide fixation, as well as the oxidative fragmentation of the pentose substrate in the photorespiration process. Both reactions occur simultaneously and in competition at the same active site. This chain is Ribulose bisphosphate carboxylase large chain, found in Prochlorococcus marinus (strain MIT 9303).